Here is a 1212-residue protein sequence, read N- to C-terminus: Probable serine/threonine-protein kinase DDB_G0284491 (1212 aa).

The helical transmembrane segment at 197 to 217 (LFHSFSLLNLYVYLIIVIRII) threads the bilayer. N-linked (GlcNAc...) asparagine glycosylation is found at N229, N299, N309, N328, N335, N341, N344, N391, N419, N422, N426, N427, N435, and N499. Residues 288–329 (LNNNNDNNLNNNNSNNNLNNNNNSNSNFNNDNNLNSNINSND) form a disordered region. Disordered stretches follow at residues 412-439 (GNSNSGSNNSNSSNNNSSSNSLINNSGG) and 489-517 (IIKNNNNNNNNNSNNNNNNNDEDDSDYEE). Residues 489 to 507 (IIKNNNNNNNNNSNNNNNN) show a composition bias toward low complexity. Over residues 508-517 (NDEDDSDYEE) the composition is skewed to acidic residues. Residues 673–693 (IQIFDDYSLIIALRLLMNFIL) form a helical membrane-spanning segment. Over residues 703–720 (VPPPPTQPSSRPQSPPTV) the composition is skewed to pro residues. Disordered stretches follow at residues 703–733 (VPPPPTQPSSRPQSPPTVSPLTPLNNHHHSG) and 751–813 (EVVS…NNNN). A Protein kinase domain is found at 865 to 1182 (ETEIEPFASG…EVYNDLQDIY (318 aa)). Residues 871 to 879 (FASGGQANI) and K924 each bind ATP. The active-site Proton acceptor is D1035.

Belongs to the protein kinase superfamily. Ser/Thr protein kinase family.

The protein localises to the membrane. It catalyses the reaction L-seryl-[protein] + ATP = O-phospho-L-seryl-[protein] + ADP + H(+). It carries out the reaction L-threonyl-[protein] + ATP = O-phospho-L-threonyl-[protein] + ADP + H(+). The sequence is that of Probable serine/threonine-protein kinase DDB_G0284491 from Dictyostelium discoideum (Social amoeba).